Consider the following 164-residue polypeptide: MPDKDEITHDAQSENEESLPLARPEGQFMKSIALDTPNSPEVFSIMKNPPEVDVQCNIDSRAIDERNGVYEVVLDLKTEARIKDKDSPDETRVAFVCKLKYCGVFTIKNLTQEQLRQTLLVEAPTLLFPFARRIIATATTDAGFPPLMLAPINFAQKYAESQRD.

Residues 1–12 (MPDKDEITHDAQ) are compositionally biased toward basic and acidic residues. Residues 1–22 (MPDKDEITHDAQSENEESLPLA) are disordered.

The protein belongs to the SecB family. As to quaternary structure, homotetramer, a dimer of dimers. One homotetramer interacts with 1 SecA dimer.

Its subcellular location is the cytoplasm. Its function is as follows. One of the proteins required for the normal export of preproteins out of the cell cytoplasm. It is a molecular chaperone that binds to a subset of precursor proteins, maintaining them in a translocation-competent state. It also specifically binds to its receptor SecA. The protein is Protein-export protein SecB of Neorickettsia sennetsu (strain ATCC VR-367 / Miyayama) (Ehrlichia sennetsu).